The sequence spans 345 residues: Phosphoribosylformylglycinamidine cyclo-ligase (345 aa).

This sequence belongs to the AIR synthase family.

Its subcellular location is the cytoplasm. The enzyme catalyses 2-formamido-N(1)-(5-O-phospho-beta-D-ribosyl)acetamidine + ATP = 5-amino-1-(5-phospho-beta-D-ribosyl)imidazole + ADP + phosphate + H(+). It functions in the pathway purine metabolism; IMP biosynthesis via de novo pathway; 5-amino-1-(5-phospho-D-ribosyl)imidazole from N(2)-formyl-N(1)-(5-phospho-D-ribosyl)glycinamide: step 2/2. This chain is Phosphoribosylformylglycinamidine cyclo-ligase, found in Pectobacterium atrosepticum (strain SCRI 1043 / ATCC BAA-672) (Erwinia carotovora subsp. atroseptica).